The sequence spans 132 residues: Large ribosomal subunit protein bL17 (132 aa).

It belongs to the bacterial ribosomal protein bL17 family. As to quaternary structure, part of the 50S ribosomal subunit. Contacts protein L32.

This Leptothrix cholodnii (strain ATCC 51168 / LMG 8142 / SP-6) (Leptothrix discophora (strain SP-6)) protein is Large ribosomal subunit protein bL17.